A 600-amino-acid polypeptide reads, in one-letter code: Arginine--tRNA ligase (600 aa).

Residues 132–142 (ANPTGPLHVGH) carry the 'HIGH' region motif.

This sequence belongs to the class-I aminoacyl-tRNA synthetase family. In terms of assembly, monomer.

Its subcellular location is the cytoplasm. The catalysed reaction is tRNA(Arg) + L-arginine + ATP = L-arginyl-tRNA(Arg) + AMP + diphosphate. This Ralstonia nicotianae (strain ATCC BAA-1114 / GMI1000) (Ralstonia solanacearum) protein is Arginine--tRNA ligase.